The chain runs to 292 residues: NAC domain-containing protein 96 (292 aa).

The NAC domain occupies 6-158 (LPPGFRFHPT…AFVLCRVAMK (153 aa)). The DNA-binding element occupies 106 to 164 (IGYRKTLVFYKGRAPLGDRSNWIMHEYRLCDDDTSQGSQNLKGAFVLCRVAMKNEIKTN). The disordered stretch occupies residues 171–199 (PSEQTIGSGESSGLSSRVTSPSRDETMPF). The span at 172–191 (SEQTIGSGESSGLSSRVTSP) shows a compositional bias: polar residues.

Interacts with ABF2 and ABF4. Expressed in roots, rosettes leaves, cauline leaves and stems.

Its subcellular location is the nucleus. In terms of biological role, transcriptional activator involved in the positive regulation of abscisic acid (ABA) responsive genes. Acts as a positive factor of ABA-mediated responses. Involved in the transcriptional activation of ABA-inducible genes in response to dehydration and osmotic stresses. Plays a positive role in both stomatal closure and water loss under dehydration stress conditions. Acts synergistically with ABF2 to activate the dehydration stress-response factor RD29A transcription. Binds to the consensus core cis-acting elements 5'-CGTA-3' and 5'-CACG-3' at the RD29A promoter. Involved in hypocotyl graft union formation. Required for the auxin-mediated promotion of vascular tissue proliferation during hypocotyl graft attachment. The protein is NAC domain-containing protein 96 of Arabidopsis thaliana (Mouse-ear cress).